The primary structure comprises 100 residues: Urease subunit gamma (100 aa).

This sequence belongs to the urease gamma subunit family. As to quaternary structure, heterotrimer of UreA (gamma), UreB (beta) and UreC (alpha) subunits. Three heterotrimers associate to form the active enzyme.

It localises to the cytoplasm. The catalysed reaction is urea + 2 H2O + H(+) = hydrogencarbonate + 2 NH4(+). It participates in nitrogen metabolism; urea degradation; CO(2) and NH(3) from urea (urease route): step 1/1. The protein is Urease subunit gamma of Bacillus cereus (strain ATCC 10987 / NRS 248).